The sequence spans 187 residues: Shikimate kinase (187 aa).

14 to 19 (TSGKST) serves as a coordination point for ATP. S18 contacts Mg(2+). 3 residues coordinate substrate: D36, R60, and G82. R120 contacts ATP. R147 provides a ligand contact to substrate.

It belongs to the shikimate kinase family. In terms of assembly, monomer. It depends on Mg(2+) as a cofactor.

Its subcellular location is the cytoplasm. The catalysed reaction is shikimate + ATP = 3-phosphoshikimate + ADP + H(+). It functions in the pathway metabolic intermediate biosynthesis; chorismate biosynthesis; chorismate from D-erythrose 4-phosphate and phosphoenolpyruvate: step 5/7. Its function is as follows. Catalyzes the specific phosphorylation of the 3-hydroxyl group of shikimic acid using ATP as a cosubstrate. This Chloroherpeton thalassium (strain ATCC 35110 / GB-78) protein is Shikimate kinase.